A 140-amino-acid chain; its full sequence is uncharacterized protein (140 aa).

This is an uncharacterized protein from Mycoplasma pneumoniae (strain ATCC 29342 / M129 / Subtype 1) (Mycoplasmoides pneumoniae).